Here is a 1077-residue protein sequence, read N- to C-terminus: RNA polymerase-associated protein CTR9 (1077 aa).

TPR repeat units lie at residues 56–89 (KEHW…FQNS), 138–174 (IGNM…EDHR), 183–216 (CLFL…NPVL), 218–251 (PDPR…NPKN), 298–332 (PVLL…SPMI), 338–371 (SESS…NEDN), 373–405 (LAKL…NESL), 421–455 (FDAK…TLAT), 462–495 (SRAY…MEFI), 501–534 (LEVL…VSDK), 540–572 (ITLE…HPAY), 664–697 (GKKS…DPFN), 699–731 (FAAQ…LDNE), 732–764 (DVQL…FDNE), 768–801 (PHIL…AKTA), and 830–863 (AETL…FREL). Residues 959–980 (EREAMAISEHNVKDDSDLSDKD) are compositionally biased toward basic and acidic residues. The disordered stretch occupies residues 959-1077 (EREAMAISEH…NDNDDNDGLF (119 aa)). 2 positions are modified to phosphoserine: Ser1015 and Ser1017. Acidic residues-rich tracts occupy residues 1042 to 1051 (FIEDSDEEEA) and 1063 to 1077 (DNDE…DGLF).

As to quaternary structure, component of the PAF1 complex which consists of at least CDC73, CTR9, LEO1, PAF1 and RTF1. Interacts with SPT6. Interacts with FACT subunits POB3 and SPT16.

Its subcellular location is the nucleus. It localises to the nucleoplasm. Functionally, the PAF1 complex is a multifunctional complex. Involved in transcription initiation via genetic interactions with TATA-binding proteins. Involved in elongation. It regulates 3'-end formation of snR47 by modulating the recruitment or stable association of NRD1 and NAB3 with RNA polymerase II. Also has a role in transcription-coupled histone modification. Required for activation of RAD6 ubiquitin conjugate and the BRE1 ubiquitin ligase which ubiquitinate 'Lys-126' histone H2B. Activates the SET1 histone methyltransferase complex for methylation of 'Lys-4' of histone H3 and for methylation of 'Lys-73' of histone H3 by DOT1 and 'Lys-36' of histone H3 by SET2. In complex with PAF1, required for normal CLN1 and CLN2 G1 cyclin expression in late G1. Also has a role in chromosome segregation where it appears to be involved in microtubule placement. The protein is RNA polymerase-associated protein CTR9 (CTR9) of Saccharomyces cerevisiae (strain ATCC 204508 / S288c) (Baker's yeast).